The following is a 373-amino-acid chain: 4-hydroxy-3-methylbut-2-en-1-yl diphosphate synthase (flavodoxin) (373 aa).

[4Fe-4S] cluster-binding residues include Cys-270, Cys-273, Cys-305, and Glu-312.

The protein belongs to the IspG family. The cofactor is [4Fe-4S] cluster.

It catalyses the reaction (2E)-4-hydroxy-3-methylbut-2-enyl diphosphate + oxidized [flavodoxin] + H2O + 2 H(+) = 2-C-methyl-D-erythritol 2,4-cyclic diphosphate + reduced [flavodoxin]. It participates in isoprenoid biosynthesis; isopentenyl diphosphate biosynthesis via DXP pathway; isopentenyl diphosphate from 1-deoxy-D-xylulose 5-phosphate: step 5/6. Its function is as follows. Converts 2C-methyl-D-erythritol 2,4-cyclodiphosphate (ME-2,4cPP) into 1-hydroxy-2-methyl-2-(E)-butenyl 4-diphosphate. This Serratia proteamaculans (strain 568) protein is 4-hydroxy-3-methylbut-2-en-1-yl diphosphate synthase (flavodoxin).